Reading from the N-terminus, the 728-residue chain is Beta-porphyranase A (728 aa).

Residues 1 to 22 (MSYKYIFLLSAFTLGVPPGIYC) form the signal peptide. Substrate is bound by residues His53, Lys76, Trp78, Lys87, His114, and Asn151. Glu152 acts as the Proton donor in catalysis. 4 residues coordinate substrate: His235, Glu279, Ser326, and Trp331. The active-site Nucleophile is Glu279. Positions 599–701 (TLQNGTFSEG…AVSFDFNSTV (103 aa)) constitute a CBM-cenC domain.

Belongs to the glycosyl hydrolase 86 family.

The catalysed reaction is Hydrolysis of beta-D-galactopyranose-(1-&gt;4)-alpha-L-galactopyranose-6-sulfate linkages in porphyran.. Functionally, cleaves the sulfated polysaccharide porphyran at the (1-&gt;4) linkages between beta-D-galactopyranose and alpha-L-galactopyranose-6-sulfate, forming mostly the disaccharide alpha-L-galactopyranose-6-sulfate-(1-&gt;3)-beta-D-galactose. Some longer oligosaccharides of even number of residues are also observed. Inactive on the non-sulfated agarose portion of the porphyran backbone. Can also use methylated galactoses. The sequence is that of Beta-porphyranase A from Phocaeicola plebeius (strain DSM 17135 / JCM 12973 / CCUG 54634 / M2) (Bacteroides plebeius).